A 92-amino-acid polypeptide reads, in one-letter code: Large ribosomal subunit protein bL28 (92 aa).

The segment at 1 to 34 is disordered; the sequence is MGRECEITGKKTMFGNNVPRKGLSRKKGGGGQHI.

The protein belongs to the bacterial ribosomal protein bL28 family.

This Borrelia turicatae (strain 91E135) protein is Large ribosomal subunit protein bL28.